The following is a 263-amino-acid chain: Tryptophan synthase alpha chain (263 aa).

Active-site proton acceptor residues include Glu41 and Asp52.

Belongs to the TrpA family. In terms of assembly, tetramer of two alpha and two beta chains.

The catalysed reaction is (1S,2R)-1-C-(indol-3-yl)glycerol 3-phosphate + L-serine = D-glyceraldehyde 3-phosphate + L-tryptophan + H2O. It participates in amino-acid biosynthesis; L-tryptophan biosynthesis; L-tryptophan from chorismate: step 5/5. In terms of biological role, the alpha subunit is responsible for the aldol cleavage of indoleglycerol phosphate to indole and glyceraldehyde 3-phosphate. This Geobacillus sp. (strain WCH70) protein is Tryptophan synthase alpha chain.